We begin with the raw amino-acid sequence, 539 residues long: Eukaryotic translation initiation factor 3 subunit L (539 aa).

A PCI domain is found at 306-514; sequence TFSDILLYIQ…IHIADTKVSH (209 aa).

The protein belongs to the eIF-3 subunit L family. As to quaternary structure, component of the eukaryotic translation initiation factor 3 (eIF-3) complex. The eIF-3 complex interacts with pix.

It localises to the cytoplasm. Its function is as follows. Component of the eukaryotic translation initiation factor 3 (eIF-3) complex, which is involved in protein synthesis of a specialized repertoire of mRNAs and, together with other initiation factors, stimulates binding of mRNA and methionyl-tRNAi to the 40S ribosome. The eIF-3 complex specifically targets and initiates translation of a subset of mRNAs involved in cell proliferation. The polypeptide is Eukaryotic translation initiation factor 3 subunit L (Drosophila yakuba (Fruit fly)).